The chain runs to 435 residues: Putative acid phosphatase F26C11.1 (435 aa).

His38 acts as the Nucleophile in catalysis. The active-site Proton donor is Asp317. A disulfide bridge connects residues Cys382 and Cys388.

The protein belongs to the histidine acid phosphatase family.

The enzyme catalyses a phosphate monoester + H2O = an alcohol + phosphate. The chain is Putative acid phosphatase F26C11.1 from Caenorhabditis elegans.